Reading from the N-terminus, the 233-residue chain is ATP synthase subunit a (233 aa).

The next 5 helical transmembrane spans lie at 29–49 (FKHV…GLIV), 86–106 (VFPL…LGLV), 118–135 (TNAA…YQGL), 188–208 (VLFF…LFLL), and 209–229 (GKVL…KGAF).

The protein belongs to the ATPase A chain family. F-type ATPases have 2 components, CF(1) - the catalytic core - and CF(0) - the membrane proton channel. CF(1) has five subunits: alpha(3), beta(3), gamma(1), delta(1), epsilon(1). CF(0) has three main subunits: a(1), b(2) and c(9-12). The alpha and beta chains form an alternating ring which encloses part of the gamma chain. CF(1) is attached to CF(0) by a central stalk formed by the gamma and epsilon chains, while a peripheral stalk is formed by the delta and b chains.

Its subcellular location is the cell inner membrane. Functionally, key component of the proton channel; it plays a direct role in the translocation of protons across the membrane. The sequence is that of ATP synthase subunit a from Nitratidesulfovibrio vulgaris (strain ATCC 29579 / DSM 644 / CCUG 34227 / NCIMB 8303 / VKM B-1760 / Hildenborough) (Desulfovibrio vulgaris).